Here is a 128-residue protein sequence, read N- to C-terminus: Large ribosomal subunit protein mL51 (128 aa).

A mitochondrion-targeting transit peptide spans 1 to 31 (MAGSVPWAASRRLWGWVPSACRSFSLGVPRL).

It belongs to the mitochondrion-specific ribosomal protein mL51 family. As to quaternary structure, component of the mitochondrial ribosome large subunit (39S) which comprises a 16S rRNA and about 50 distinct proteins. Interacts with OXA1L.

The protein localises to the mitochondrion. The chain is Large ribosomal subunit protein mL51 (Mrpl51) from Mus musculus (Mouse).